A 185-amino-acid chain; its full sequence is Elongation factor P (185 aa).

It belongs to the elongation factor P family.

The protein localises to the cytoplasm. Its pathway is protein biosynthesis; polypeptide chain elongation. Involved in peptide bond synthesis. Stimulates efficient translation and peptide-bond synthesis on native or reconstituted 70S ribosomes in vitro. Probably functions indirectly by altering the affinity of the ribosome for aminoacyl-tRNA, thus increasing their reactivity as acceptors for peptidyl transferase. This Bacillus licheniformis (strain ATCC 14580 / DSM 13 / JCM 2505 / CCUG 7422 / NBRC 12200 / NCIMB 9375 / NCTC 10341 / NRRL NRS-1264 / Gibson 46) protein is Elongation factor P.